The sequence spans 77 residues: Putative snRNP Sm-like protein (77 aa).

Positions 8-77 constitute a Sm domain; that stretch reads PTLRMMLDYV…DSVVVITPAA (70 aa).

It belongs to the snRNP Sm proteins family.

The sequence is that of Putative snRNP Sm-like protein from Aeropyrum pernix (strain ATCC 700893 / DSM 11879 / JCM 9820 / NBRC 100138 / K1).